Here is a 286-residue protein sequence, read N- to C-terminus: Movement protein (286 aa).

Belongs to the tenuiviruses pc4 protein family. As to quaternary structure, interacts with the rice proteins DJA6 and HSP17.9A.

The protein localises to the host cytoplasm. Its function is as follows. Transports viral genome to neighboring plant cells directly through plasmosdesmata, without any budding. The movement protein allows efficient cell to cell propagation, by bypassing the host cell wall barrier. The chain is Movement protein from Avena sativa (Oat).